The chain runs to 98 residues: Defensin-B (98 aa).

The signal sequence occupies residues 1-20; it reads MKSITVICFLALCTVAITSA. Positions 21–58 are excised as a propeptide; it reads YPQEPVLADEARPFANSLFDELPEETYQAAVENFRLKR. Disulfide bonds link cysteine 61–cysteine 88, cysteine 74–cysteine 94, and cysteine 78–cysteine 96.

The protein belongs to the invertebrate defensin family. Type 1 subfamily.

It is found in the secreted. Its function is as follows. Antibacterial peptide mostly active against Gram-positive bacteria. This chain is Defensin-B (DEFB), found in Aedes aegypti (Yellowfever mosquito).